We begin with the raw amino-acid sequence, 492 residues long: NADH-quinone oxidoreductase subunit N (492 aa).

The next 14 helical transmembrane spans lie at 5-25, 37-57, 72-92, 104-124, 129-149, 164-184, 205-225, 239-259, 276-295, 302-322, 337-357, 380-400, 414-434, and 466-486; these read PMTALLPDALVMAAIVVAWLI, TYFIALLSTVVAGIWFAIDAL, VVDPFASVMKAVVSLGYAVSI, LYEGNFFLLGMFSLLGQLVMI, FLTLYLGLELMSLSLYAAIAL, YVLGALASGFLLYGISMLYGA, VVLLFGVIFIVAGVAFKMGAV, PTAMTLIVGGGPKVAAFAWGL, MLVILAALSLIVGNITGIVQ, LAYSAISNMGFVLLGLLAGVV, MFYSIVYLITTLGSFGVVMLL, FAFVMMVMMFSLAGIPPAVGF, GLTWLAVLAVITSLFGAFYYL, and VAVLVLGIVPGPLMSICLNAI.

The protein belongs to the complex I subunit 2 family. NDH-1 is composed of 14 different subunits. Subunits NuoA, H, J, K, L, M, N constitute the membrane sector of the complex.

Its subcellular location is the cell inner membrane. The enzyme catalyses a quinone + NADH + 5 H(+)(in) = a quinol + NAD(+) + 4 H(+)(out). Functionally, NDH-1 shuttles electrons from NADH, via FMN and iron-sulfur (Fe-S) centers, to quinones in the respiratory chain. The immediate electron acceptor for the enzyme in this species is believed to be ubiquinone. Couples the redox reaction to proton translocation (for every two electrons transferred, four hydrogen ions are translocated across the cytoplasmic membrane), and thus conserves the redox energy in a proton gradient. This is NADH-quinone oxidoreductase subunit N from Paraburkholderia phymatum (strain DSM 17167 / CIP 108236 / LMG 21445 / STM815) (Burkholderia phymatum).